We begin with the raw amino-acid sequence, 735 residues long: Catalase-peroxidase (735 aa).

The segment covering 1-10 has biased composition (polar residues); sequence MMDGAQTNSG. The disordered stretch occupies residues 1 to 20; sequence MMDGAQTNSGGCPVMHGGGS. A cross-link (tryptophyl-tyrosyl-methioninium (Trp-Tyr) (with M-254)) is located at residues 100–228; it reads WHSAGTYRTY…LAAVQMGLIY (129 aa). The active-site Proton acceptor is histidine 101. The tryptophyl-tyrosyl-methioninium (Tyr-Met) (with W-100) cross-link spans 228-254; the sequence is YVNPQGPDGNPDPLASAFDIRDTFARM. Histidine 269 is a heme b binding site.

It belongs to the peroxidase family. Peroxidase/catalase subfamily. As to quaternary structure, homodimer or homotetramer. The cofactor is heme b. Post-translationally, formation of the three residue Trp-Tyr-Met cross-link is important for the catalase, but not the peroxidase activity of the enzyme.

The catalysed reaction is H2O2 + AH2 = A + 2 H2O. It carries out the reaction 2 H2O2 = O2 + 2 H2O. Functionally, bifunctional enzyme with both catalase and broad-spectrum peroxidase activity. The chain is Catalase-peroxidase from Jannaschia sp. (strain CCS1).